The primary structure comprises 101 residues: Protein translation factor SUI1 homolog (101 aa).

The protein belongs to the SUI1 family.

The sequence is that of Protein translation factor SUI1 homolog from Methanosphaera stadtmanae (strain ATCC 43021 / DSM 3091 / JCM 11832 / MCB-3).